A 53-amino-acid chain; its full sequence is UPF0181 protein VC_A0569 (53 aa).

The protein belongs to the UPF0181 family.

This chain is UPF0181 protein VC_A0569, found in Vibrio cholerae serotype O1 (strain ATCC 39315 / El Tor Inaba N16961).